Reading from the N-terminus, the 487-residue chain is MTLLMQDHKSIYNKDIEILIEVEELITSVPENKKNDFKSLIDNRIMTLLNKIQHPVAAENVFGMCIAYPNTYIRYRLIDFVEKWVPYFSAVETIINLTQDPDDLVSFKAMDVCANHKIEESVAYLSSIIDDVRESISYPKKPVGLGAQKVLSTLLDIFGVEKHEELVMLKNYFDQNGILPNNFDFEEKIPQSLIEEFEKTEEDGMILIPGGFFEFGLNENEIPDKTFNWKDAVPRQKVWLPPFFIDKYPVTNKDYDIFTEFIEENGHIFCHPNEPQNKQHRRNTYWDDRYLDNHPVTGIDFYDAFAYARYKGKELPTEFQWEKAARGEKGNVWPWGDKFDPAKVQYAGSLYNEPITSLKSWRENLLKAHADKELNHLTSDIFEQNGESPYGVCGMIGGTWEWTRSELKTKRAFHPIFENVPFNSVNSFAVLKGGSFFSHPGLMFPSFRAKDIPFCRHNEMGIRCVKNIPVYKIRESINGPITNKAIY.

This is an uncharacterized protein from Bacillus subtilis (strain 168).